The sequence spans 203 residues: MSRYRGPRFKKIRRLGSLPGLTSKRPRSGSDLRNQSRSGKRSQYRIRLEEKQKLRFHYGLTERQLLRYVRIAGKAKGSTGQVLLQLLEMRLDNILFRLGMASTIPGARQLVNHRHILVNGRLVDIPSYRCKPRDIITTRDEHRSRALIQNSIDSSQKEELPKHLTLHSLQYQYKGLVNQIIDSKWVGLKINELLVVEYYSRQT.

The disordered stretch occupies residues 15 to 43 (LGSLPGLTSKRPRSGSDLRNQSRSGKRSQ). One can recognise an S4 RNA-binding domain in the interval 89–169 (MRLDNILFRL…LPKHLTLHSL (81 aa)).

It belongs to the universal ribosomal protein uS4 family. Part of the 30S ribosomal subunit. Contacts protein S5. The interaction surface between S4 and S5 is involved in control of translational fidelity.

It localises to the plastid. The protein resides in the chloroplast. Functionally, one of the primary rRNA binding proteins, it binds directly to 16S rRNA where it nucleates assembly of the body of the 30S subunit. With S5 and S12 plays an important role in translational accuracy. The chain is Small ribosomal subunit protein uS4c (rps4) from Illicium oligandrum (Star anise).